The sequence spans 122 residues: Proteasome assembly chaperone 3 (122 aa).

The residue at position 1 (M1) is an N-acetylmethionine.

The protein belongs to the PSMG3 family. In terms of assembly, homodimer. Interacts with PSMG4. Interacts directly with alpha and beta subunits of the 20S proteasome but dissociates before the formation of half-proteasomes, probably upon recruitment of POMP.

In terms of biological role, chaperone protein which promotes assembly of the 20S proteasome. May cooperate with PSMG1-PSMG2 heterodimers to orchestrate the correct assembly of proteasomes. This Homo sapiens (Human) protein is Proteasome assembly chaperone 3.